Reading from the N-terminus, the 264-residue chain is S-adenosylmethionine decarboxylase proenzyme (264 aa).

Serine 112 serves as the catalytic Schiff-base intermediate with substrate; via pyruvic acid. Serine 112 is subject to Pyruvic acid (Ser); by autocatalysis. The active-site Proton acceptor; for processing activity is histidine 117. Cysteine 140 acts as the Proton donor; for catalytic activity in catalysis.

Belongs to the prokaryotic AdoMetDC family. Type 2 subfamily. Heterooctamer of four alpha and four beta chains arranged as a tetramer of alpha/beta heterodimers. Pyruvate serves as cofactor. In terms of processing, is synthesized initially as an inactive proenzyme. Formation of the active enzyme involves a self-maturation process in which the active site pyruvoyl group is generated from an internal serine residue via an autocatalytic post-translational modification. Two non-identical subunits are generated from the proenzyme in this reaction, and the pyruvate is formed at the N-terminus of the alpha chain, which is derived from the carboxyl end of the proenzyme. The post-translation cleavage follows an unusual pathway, termed non-hydrolytic serinolysis, in which the side chain hydroxyl group of the serine supplies its oxygen atom to form the C-terminus of the beta chain, while the remainder of the serine residue undergoes an oxidative deamination to produce ammonia and the pyruvoyl group blocking the N-terminus of the alpha chain.

The catalysed reaction is S-adenosyl-L-methionine + H(+) = S-adenosyl 3-(methylsulfanyl)propylamine + CO2. It functions in the pathway amine and polyamine biosynthesis; S-adenosylmethioninamine biosynthesis; S-adenosylmethioninamine from S-adenosyl-L-methionine: step 1/1. Catalyzes the decarboxylation of S-adenosylmethionine to S-adenosylmethioninamine (dcAdoMet), the propylamine donor required for the synthesis of the polyamines spermine and spermidine from the diamine putrescine. This is S-adenosylmethionine decarboxylase proenzyme from Yersinia pseudotuberculosis serotype O:1b (strain IP 31758).